Consider the following 203-residue polypeptide: dITP/XTP pyrophosphatase (203 aa).

8-13 (TANKGK) contributes to the substrate binding site. Mg(2+)-binding residues include Glu41 and Asp70. Asp70 acts as the Proton acceptor in catalysis. Substrate is bound by residues Ser71, 153-156 (FGYD), Lys176, and 181-182 (HR).

It belongs to the HAM1 NTPase family. In terms of assembly, homodimer. It depends on Mg(2+) as a cofactor.

It carries out the reaction XTP + H2O = XMP + diphosphate + H(+). It catalyses the reaction dITP + H2O = dIMP + diphosphate + H(+). The catalysed reaction is ITP + H2O = IMP + diphosphate + H(+). Its function is as follows. Pyrophosphatase that catalyzes the hydrolysis of nucleoside triphosphates to their monophosphate derivatives, with a high preference for the non-canonical purine nucleotides XTP (xanthosine triphosphate), dITP (deoxyinosine triphosphate) and ITP. Seems to function as a house-cleaning enzyme that removes non-canonical purine nucleotides from the nucleotide pool, thus preventing their incorporation into DNA/RNA and avoiding chromosomal lesions. In Listeria monocytogenes serotype 4b (strain F2365), this protein is dITP/XTP pyrophosphatase.